Consider the following 104-residue polypeptide: NADH-quinone oxidoreductase subunit K (104 aa).

The next 3 membrane-spanning stretches (helical) occupy residues Val4–Ala24, Val31–Phe51, and Leu67–Leu87.

It belongs to the complex I subunit 4L family. NDH-1 is composed of 14 different subunits. Subunits NuoA, H, J, K, L, M, N constitute the membrane sector of the complex.

The protein resides in the cell membrane. It catalyses the reaction a quinone + NADH + 5 H(+)(in) = a quinol + NAD(+) + 4 H(+)(out). Functionally, NDH-1 shuttles electrons from NADH, via FMN and iron-sulfur (Fe-S) centers, to quinones in the respiratory chain. The immediate electron acceptor for the enzyme in this species is believed to be a menaquinone. Couples the redox reaction to proton translocation (for every two electrons transferred, four hydrogen ions are translocated across the cytoplasmic membrane), and thus conserves the redox energy in a proton gradient. This chain is NADH-quinone oxidoreductase subunit K, found in Bacillus cytotoxicus (strain DSM 22905 / CIP 110041 / 391-98 / NVH 391-98).